The following is a 510-amino-acid chain: NAD(P)H-quinone oxidoreductase subunit 2 A, chloroplastic (510 aa).

Helical transmembrane passes span 24 to 44 (LLLF…GLIL), 59 to 79 (WFYF…LFRW), 99 to 119 (IFQF…VEYI), 124 to 144 (MAIT…MFLC), 149 to 169 (LITL…LSGY), 183 to 203 (YLLM…WLYG), 229 to 249 (ISIA…PAPF), 295 to 315 (WHLL…LIAI), 323 to 343 (MLAY…IVGD), 354 to 374 (YMLF…SFGL), 395 to 415 (ALSL…AGFF), and 418 to 438 (LHLF…IGLL).

The protein belongs to the complex I subunit 2 family. As to quaternary structure, NDH is composed of at least 16 different subunits, 5 of which are encoded in the nucleus.

Its subcellular location is the plastid. It localises to the chloroplast thylakoid membrane. The enzyme catalyses a plastoquinone + NADH + (n+1) H(+)(in) = a plastoquinol + NAD(+) + n H(+)(out). The catalysed reaction is a plastoquinone + NADPH + (n+1) H(+)(in) = a plastoquinol + NADP(+) + n H(+)(out). In terms of biological role, NDH shuttles electrons from NAD(P)H:plastoquinone, via FMN and iron-sulfur (Fe-S) centers, to quinones in the photosynthetic chain and possibly in a chloroplast respiratory chain. The immediate electron acceptor for the enzyme in this species is believed to be plastoquinone. Couples the redox reaction to proton translocation, and thus conserves the redox energy in a proton gradient. The sequence is that of NAD(P)H-quinone oxidoreductase subunit 2 A, chloroplastic from Dioscorea elephantipes (Elephant's foot yam).